A 210-amino-acid chain; its full sequence is MGQKTNPTGFRLAVRRNWQSRWYATKKDFPKLLEEDQIIREKLMEKLKQASVPRIFIERASNRVRVKIYTARPGIVIGRKGQEIEKIKEELAKLTGKEILLDIQEVKKPEIEAQLVAENVALQLERRIAFRRAMKKAVEMAMTLGAEGIRIQCSGRLGGADIARREWQRKGRVPLHTLRENIDYGFSEAHTVYGKIGVKCWICKKESDNN.

Positions 39–107 (IREKLMEKLK…EILLDIQEVK (69 aa)) constitute a KH type-2 domain.

The protein belongs to the universal ribosomal protein uS3 family. In terms of assembly, part of the 30S ribosomal subunit. Forms a tight complex with proteins S10 and S14.

Binds the lower part of the 30S subunit head. Binds mRNA in the 70S ribosome, positioning it for translation. The chain is Small ribosomal subunit protein uS3 from Opitutus terrae (strain DSM 11246 / JCM 15787 / PB90-1).